The primary structure comprises 369 residues: MKSAISSSLFFNSKNLLNPNPLSRFISLKSNFLPKLSPRSITSHTLKLPSSSTSALRSISSSMASSFNPEQARVPSALPLPAPPLTKFNIGLCQLSVTSDKKRNISHAKKAIEEAASKGAKLVLLPEIWNSPYSNDSFPVYAEEIDAGGDASPSTAMLSEVSKRLKITIIGGSIPERVGDRLYNTCCVFGSDGELKAKHRKIHLFDIDIPGKITFMESKTLTAGETPTIVDTDVGRIGIGICYDIRFQELAMIYAARGAHLLCYPGAFNMTTGPLHWELLQRARATDNQLYVATCSPARDSGAGYTAWGHSTLVGPFGEVLATTEHEEAIIIAEIDYSILEQRRTSLPLNRQRRGDLYQLVDVQRLDSK.

The N-terminal 63 residues, 1-63, are a transit peptide targeting the chloroplast; sequence MKSAISSSLF…SALRSISSSM (63 aa). A64 bears the N-acetylalanine mark. One can recognise a CN hydrolase domain in the interval 88–337; it reads FNIGLCQLSV…EAIIIAEIDY (250 aa). E127 serves as the catalytic Proton acceptor. The active-site Proton donor is the K201. The Nucleophile role is filled by C242.

The protein belongs to the nitrilase superfamily. NIT1/NIT2 family.

The protein resides in the plastid. Its subcellular location is the chloroplast. The catalysed reaction is a monoamide of a dicarboxylate + H2O = a dicarboxylate + NH4(+). Its function is as follows. Omega-amidase involved in the metabolism of asparagine. Probably also closely coupled with glutamine transamination in the methionine salvage cycle. Can use alpha-ketosuccinamate and alpha-hydroxysuccinamate as substrates, producing respectively oxaloacetate and malate, or alpha-ketoglutaramate, producing alpha-ketoglutarate. The protein is Omega-amidase, chloroplastic of Arabidopsis thaliana (Mouse-ear cress).